A 570-amino-acid chain; its full sequence is Proline--tRNA ligase (570 aa).

This sequence belongs to the class-II aminoacyl-tRNA synthetase family. ProS type 1 subfamily. As to quaternary structure, homodimer.

It localises to the cytoplasm. The catalysed reaction is tRNA(Pro) + L-proline + ATP = L-prolyl-tRNA(Pro) + AMP + diphosphate. In terms of biological role, catalyzes the attachment of proline to tRNA(Pro) in a two-step reaction: proline is first activated by ATP to form Pro-AMP and then transferred to the acceptor end of tRNA(Pro). As ProRS can inadvertently accommodate and process non-cognate amino acids such as alanine and cysteine, to avoid such errors it has two additional distinct editing activities against alanine. One activity is designated as 'pretransfer' editing and involves the tRNA(Pro)-independent hydrolysis of activated Ala-AMP. The other activity is designated 'posttransfer' editing and involves deacylation of mischarged Ala-tRNA(Pro). The misacylated Cys-tRNA(Pro) is not edited by ProRS. This Pelotomaculum thermopropionicum (strain DSM 13744 / JCM 10971 / SI) protein is Proline--tRNA ligase.